The sequence spans 327 residues: GMP reductase (327 aa).

Cysteine 175 (thioimidate intermediate) is an active-site residue. NADP(+) is bound at residue 204 to 227 (IIADGGIRTNGDVAKSIRFGATMV).

It belongs to the IMPDH/GMPR family. GuaC type 2 subfamily.

It carries out the reaction IMP + NH4(+) + NADP(+) = GMP + NADPH + 2 H(+). Functionally, catalyzes the irreversible NADPH-dependent deamination of GMP to IMP. It functions in the conversion of nucleobase, nucleoside and nucleotide derivatives of G to A nucleotides, and in maintaining the intracellular balance of A and G nucleotides. This chain is GMP reductase, found in Bacillus anthracis.